A 438-amino-acid polypeptide reads, in one-letter code: Aspartate aminotransferase, cytoplasmic (438 aa).

G73, W167, and N220 together coordinate L-aspartate. N6-(pyridoxal phosphate)lysine is present on K284. L-aspartate is bound at residue R412.

This sequence belongs to the class-I pyridoxal-phosphate-dependent aminotransferase family. Homodimer. It depends on pyridoxal 5'-phosphate as a cofactor.

The protein resides in the cytoplasm. It catalyses the reaction L-aspartate + 2-oxoglutarate = oxaloacetate + L-glutamate. Its function is as follows. Plays a key role in amino acid metabolism. The polypeptide is Aspartate aminotransferase, cytoplasmic (aatB) (Dictyostelium discoideum (Social amoeba)).